Here is a 63-residue protein sequence, read N- to C-terminus: uncharacterized protein (63 aa).

The segment at 35-63 is disordered; the sequence is PKPDSLISEHPTAQEAMDAKKRYEDPDKE. Residues 51–63 show a composition bias toward basic and acidic residues; sequence MDAKKRYEDPDKE.

This is an uncharacterized protein from Escherichia coli O157:H7.